The sequence spans 172 residues: Mitochondrial import inner membrane translocase subunit Tim17-B (172 aa).

The cysteines at positions 9 and 78 are disulfide-linked. A run of 3 helical transmembrane segments spans residues 17 to 37, 61 to 77, and 113 to 133; these read CGGA…IKGF, QIGG…STID, and VGSA…GILL. The interval 147–172 is disordered; sequence FLEDPSQLTPKEGSPAPGYPNYQQYH.

The protein belongs to the Tim17/Tim22/Tim23 family. Component of the TIM23 complex at least composed of TIMM23, TIMM17 (TIMM17A or TIMM17B) and TIMM50. The complex interacts with the TIMM44 component of the PAM complex. The complex also interacts with DNAJC15.

Its subcellular location is the mitochondrion inner membrane. Functionally, essential component of the TIM23 complex, a complex that mediates the translocation of transit peptide-containing proteins across the mitochondrial inner membrane. This chain is Mitochondrial import inner membrane translocase subunit Tim17-B (Timm17b), found in Mus musculus (Mouse).